The chain runs to 256 residues: Ras-related protein Rab-26 (256 aa).

The tract at residues 1 to 51 (MSRKKTPKSKGASTPAASTLPTANGARPARSGTALSGPDAPPNGPLQPGRP) is disordered. The span at 12–23 (ASTPAASTLPTA) shows a compositional bias: low complexity. GTP contacts are provided by Ser72, Gly73, Val74, Gly75, Lys76, Thr77, Cys78, Ser95, and Thr96. Mg(2+) is bound at residue Thr77. Short sequence motifs (switch) lie at residues 86–101 (GAFL…GIDF) and 119–136 (DTAG…YYRD). 2 residues coordinate Mg(2+): Thr96 and Asp119. Residues Gly122, Asn177, Lys178, Asp180, Ala208, and Lys209 each contribute to the GTP site. 2 S-geranylgeranyl cysteine lipidation sites follow: Cys253 and Cys254.

Belongs to the small GTPase superfamily. Rab family. In terms of assembly, interacts with RIMS1. Interacts with ADRA2B. The cofactor is Mg(2+). In terms of tissue distribution, predominantly expressed in brain.

It localises to the golgi apparatus membrane. Its subcellular location is the cytoplasmic vesicle. The protein resides in the secretory vesicle membrane. The catalysed reaction is GTP + H2O = GDP + phosphate + H(+). Regulated by guanine nucleotide exchange factors (GEFs) which promote the exchange of bound GDP for free GTP. Regulated by GTPase activating proteins (GAPs) which increase the GTP hydrolysis activity. Inhibited by GDP dissociation inhibitors (GDIs). The small GTPases Rab are key regulators of intracellular membrane trafficking, from the formation of transport vesicles to their fusion with membranes. Rabs cycle between an inactive GDP-bound form and an active GTP-bound form that is able to recruit to membranes different set of downstream effectors directly responsible for vesicle formation, movement, tethering and fusion. RAB26 mediates transport of ADRA2A and ADRA2B from the Golgi to the cell membrane. Plays a role in the maturation of zymogenic granules and in pepsinogen secretion in the stomach. Plays a role in the secretion of amylase from acinar granules in the parotid gland. The chain is Ras-related protein Rab-26 from Homo sapiens (Human).